The primary structure comprises 118 residues: Large ribosomal subunit protein uL22 (118 aa).

It belongs to the universal ribosomal protein uL22 family. Part of the 50S ribosomal subunit.

Its function is as follows. This protein binds specifically to 23S rRNA; its binding is stimulated by other ribosomal proteins, e.g. L4, L17, and L20. It is important during the early stages of 50S assembly. It makes multiple contacts with different domains of the 23S rRNA in the assembled 50S subunit and ribosome. In terms of biological role, the globular domain of the protein is located near the polypeptide exit tunnel on the outside of the subunit, while an extended beta-hairpin is found that lines the wall of the exit tunnel in the center of the 70S ribosome. In Levilactobacillus brevis (strain ATCC 367 / BCRC 12310 / CIP 105137 / JCM 1170 / LMG 11437 / NCIMB 947 / NCTC 947) (Lactobacillus brevis), this protein is Large ribosomal subunit protein uL22.